The chain runs to 167 residues: Crossover junction endodeoxyribonuclease RuvC (167 aa).

Residues Asp11, Glu71, and Asp143 contribute to the active site. Residues Asp11, Glu71, and Asp143 each contribute to the Mg(2+) site.

This sequence belongs to the RuvC family. In terms of assembly, homodimer which binds Holliday junction (HJ) DNA. The HJ becomes 2-fold symmetrical on binding to RuvC with unstacked arms; it has a different conformation from HJ DNA in complex with RuvA. In the full resolvosome a probable DNA-RuvA(4)-RuvB(12)-RuvC(2) complex forms which resolves the HJ. The cofactor is Mg(2+).

It is found in the cytoplasm. The enzyme catalyses Endonucleolytic cleavage at a junction such as a reciprocal single-stranded crossover between two homologous DNA duplexes (Holliday junction).. In terms of biological role, the RuvA-RuvB-RuvC complex processes Holliday junction (HJ) DNA during genetic recombination and DNA repair. Endonuclease that resolves HJ intermediates. Cleaves cruciform DNA by making single-stranded nicks across the HJ at symmetrical positions within the homologous arms, yielding a 5'-phosphate and a 3'-hydroxyl group; requires a central core of homology in the junction. The consensus cleavage sequence is 5'-(A/T)TT(C/G)-3'. Cleavage occurs on the 3'-side of the TT dinucleotide at the point of strand exchange. HJ branch migration catalyzed by RuvA-RuvB allows RuvC to scan DNA until it finds its consensus sequence, where it cleaves and resolves the cruciform DNA. This is Crossover junction endodeoxyribonuclease RuvC from Bartonella bacilliformis (strain ATCC 35685 / KC583 / Herrer 020/F12,63).